The sequence spans 454 residues: 5-hydroxytryptamine receptor 3D (454 aa).

The signal sequence occupies residues 1 to 24 (MQKHSPGPPALALLSQSLLTTGNG). Over 25–232 (DTLIINCPGF…IRRRCRPSPY (208 aa)) the chain is Extracellular. Asn66 is a glycosylation site (N-linked (GlcNAc...) asparagine). The chain crosses the membrane as a helical span at residues 233 to 253 (VVNFLVPSGILIAIDALSFYL). Residues 254 to 264 (PLESGNCAPFK) lie on the Cytoplasmic side of the membrane. A helical transmembrane segment spans residues 265 to 285 (MTVLLGYSVFLLMMNDLLPAT). The Extracellular portion of the chain corresponds to 286–306 (STSSHASLVAPLALMQTPLPA). A helical membrane pass occupies residues 307 to 327 (GVYFALCLSLMVGSLLETIFI). The Cytoplasmic segment spans residues 328–431 (THLLHVATTQ…WVQFSHAMDA (104 aa)). The disordered stretch occupies residues 363 to 410 (PQKGNKGPGLTPTHLPGVKEPEVSAGQMPGPGEAELTGGSEWTRAQRE). The segment at 399–430 (TGGSEWTRAQREHEAQKQHSVELWVQFSHAMD) is HA-stretch; determines single-channel conductance in 5-HT3 receptors. A helical membrane pass occupies residues 432 to 452 (LLFRLYLLFMASSIITVICLW). Topologically, residues 453–454 (NT) are extracellular.

The protein belongs to the ligand-gated ion channel (TC 1.A.9) family. 5-hydroxytryptamine receptor (TC 1.A.9.2) subfamily. HTR3D sub-subfamily. Forms homopentameric as well as heteropentameric serotonin-activated cation-selective channel complexes with HTR3A. The homomeric complex is not functional. Heteropentameric complexes display properties which resemble that of neuronal serotonin-activated channels in vivo. As to expression, expressed in liver, as well as fetal and adult colon and kidney.

Its subcellular location is the postsynaptic cell membrane. It is found in the cell membrane. The enzyme catalyses Na(+)(in) = Na(+)(out). The catalysed reaction is K(+)(in) = K(+)(out). It catalyses the reaction Ca(2+)(in) = Ca(2+)(out). Its function is as follows. Forms serotonin (5-hydroxytryptamine/5-HT3)-activated cation-selective channel complexes, which when activated cause fast, depolarizing responses in neurons. This is 5-hydroxytryptamine receptor 3D from Homo sapiens (Human).